A 208-amino-acid polypeptide reads, in one-letter code: ATP-dependent Clp protease proteolytic subunit (208 aa).

Ser-106 functions as the Nucleophile in the catalytic mechanism. His-131 is an active-site residue.

Belongs to the peptidase S14 family. In terms of assembly, fourteen ClpP subunits assemble into 2 heptameric rings which stack back to back to give a disk-like structure with a central cavity, resembling the structure of eukaryotic proteasomes.

The protein localises to the cytoplasm. The catalysed reaction is Hydrolysis of proteins to small peptides in the presence of ATP and magnesium. alpha-casein is the usual test substrate. In the absence of ATP, only oligopeptides shorter than five residues are hydrolyzed (such as succinyl-Leu-Tyr-|-NHMec, and Leu-Tyr-Leu-|-Tyr-Trp, in which cleavage of the -Tyr-|-Leu- and -Tyr-|-Trp bonds also occurs).. Its function is as follows. Cleaves peptides in various proteins in a process that requires ATP hydrolysis. Has a chymotrypsin-like activity. Plays a major role in the degradation of misfolded proteins. The polypeptide is ATP-dependent Clp protease proteolytic subunit (Roseobacter denitrificans (strain ATCC 33942 / OCh 114) (Erythrobacter sp. (strain OCh 114))).